The following is a 154-amino-acid chain: Protein X (154 aa).

The tract at residues 68 to 117 is mitochondrial targeting sequence; that stretch reads PCALRFTSARRMETTVNAHQILPKVLHKRTLGLSAMSTTDLEAYFKDCLF.

Belongs to the orthohepadnavirus protein X family. In terms of assembly, may form homodimer. May interact with host CEBPA, CFLAR, CREB1, DDB1, E4F1, HBXIP, HSPD1/HSP60, NFKBIA, POLR2E and SMAD4. Interacts with host SMC5-SMC6 complex and induces its degradation. Interacts with host TRPC4AP; leading to prevent ubiquitination of TRPC4AP. Interacts with host PLSCR1; this interaction promotes ubiquitination and degradation of HBx and impairs HBx-mediated cell proliferation. A fraction may be phosphorylated in insect cells and HepG2 cells, a human hepatoblastoma cell line. Phosphorylated in vitro by host protein kinase C or mitogen-activated protein kinase. N-acetylated in insect cells.

The protein resides in the host cytoplasm. It localises to the host nucleus. The protein localises to the host mitochondrion. Its function is as follows. Multifunctional protein that plays a role in silencing host antiviral defenses and promoting viral transcription. Does not seem to be essential for HBV infection. May be directly involved in development of cirrhosis and liver cancer (hepatocellular carcinoma). Most of cytosolic activities involve modulation of cytosolic calcium. The effect on apoptosis is controversial depending on the cell types in which the studies have been conducted. May induce apoptosis by localizing in mitochondria and causing loss of mitochondrial membrane potential. May also modulate apoptosis by binding host CFLAR, a key regulator of the death-inducing signaling complex (DISC). Promotes viral transcription by using the host E3 ubiquitin ligase DDB1 to target the SMC5-SMC6 complex to proteasomal degradation. This host complex would otherwise bind to viral episomal DNA, and prevents its transcription. Moderately stimulates transcription of many different viral and cellular transcription elements. Promoters and enhancers stimulated by HBx contain DNA binding sites for NF-kappa-B, AP-1, AP-2, c-EBP, ATF/CREB, or the calcium-activated factor NF-AT. This Hepatitis B virus genotype E (isolate Cote d'Ivoire/ABI-212/2003) (HBV-E) protein is Protein X.